The primary structure comprises 327 residues: ATPase ASNA1 homolog (327 aa).

26-33 (KGGVGKTT) contributes to the ATP binding site. Asp57 is a catalytic residue. Glu238 and Asn265 together coordinate ATP. The Zn(2+) site is built by Cys274 and Cys277.

This sequence belongs to the arsA ATPase family. As to quaternary structure, homodimer.

It is found in the cytoplasm. The protein resides in the endoplasmic reticulum. ATPase required for the post-translational delivery of tail-anchored (TA) proteins to the endoplasmic reticulum. Recognizes and selectively binds the transmembrane domain of TA proteins in the cytosol. This complex then targets to the endoplasmic reticulum by membrane-bound receptors, where the tail-anchored protein is released for insertion. This process is regulated by ATP binding and hydrolysis. ATP binding drives the homodimer towards the closed dimer state, facilitating recognition of newly synthesized TA membrane proteins. ATP hydrolysis is required for insertion. Subsequently, the homodimer reverts towards the open dimer state, lowering its affinity for the membrane-bound receptor, and returning it to the cytosol to initiate a new round of targeting. This chain is ATPase ASNA1 homolog, found in Entamoeba histolytica (strain ATCC 30459 / HM-1:IMSS / ABRM).